A 122-amino-acid chain; its full sequence is Crustacean hyperglycemic hormones 7 (122 aa).

The first 26 residues, 1 to 26, serve as a signal peptide directing secretion; sequence MSLAMTAFRMMAVALVVVVASSTTWA. 3 cysteine pairs are disulfide-bonded: C55/C91, C71/C87, and C74/C100. V120 carries the post-translational modification Valine amide.

The protein belongs to the arthropod CHH/MIH/GIH/VIH hormone family. Produced by the medulla terminalis X-organ in the eyestalks and transported to the sinus gland where they are stored and released.

It is found in the secreted. Its function is as follows. Hormone found in the sinus gland of isopods and decapods which controls the blood sugar level. Has a secretagogue action over the amylase released from the midgut gland. May act as a stress hormone and may be involved in the control of molting and reproduction. The protein is Crustacean hyperglycemic hormones 7 of Penaeus japonicus (Kuruma prawn).